The chain runs to 157 residues: Putative pre-16S rRNA nuclease (157 aa).

Belongs to the YqgF nuclease family.

The protein resides in the cytoplasm. Functionally, could be a nuclease involved in processing of the 5'-end of pre-16S rRNA. This Anaplasma marginale (strain St. Maries) protein is Putative pre-16S rRNA nuclease.